The primary structure comprises 181 residues: MSSHRRRVKHFDRKSGPRKALLRGLVTSLIEHGRITTTVDRAKEVRRHVEKAITLGKKGDLSTTRLLLSRFPNKEAVATIMKDLSPRFKTRPGGYTRIIKIGRRPGDTAEMAFLEFVDYDFEAKTADTAEKSEKSAKTAKAAKAPAKKATAKKASTKAVAAKKKAVKKAQKKDRAASAARA.

The tract at residues 129-181 is disordered; the sequence is AEKSEKSAKTAKAAKAPAKKATAKKASTKAVAAKKKAVKKAQKKDRAASAARA. Over residues 145 to 171 the composition is skewed to basic residues; that stretch reads PAKKATAKKASTKAVAAKKKAVKKAQK.

The protein belongs to the bacterial ribosomal protein bL17 family. In terms of assembly, part of the 50S ribosomal subunit. Contacts protein L32.

This chain is Large ribosomal subunit protein bL17, found in Bdellovibrio bacteriovorus (strain ATCC 15356 / DSM 50701 / NCIMB 9529 / HD100).